A 429-amino-acid polypeptide reads, in one-letter code: Guanine nucleotide-binding protein subunit alpha (429 aa).

The N-myristoyl glycine moiety is linked to residue glycine 2. Cysteine 3 carries the S-palmitoyl cysteine lipid modification. Residues 40–429 (KGVKLLLLGA…QQNLKKSGIM (390 aa)) form the G-alpha domain. A G1 motif region spans residues 43 to 56 (KLLLLGAGESGKST). Residues glutamate 51, serine 52, glycine 53, lysine 54, serine 55, and threonine 56 each contribute to the GTP site. Serine 55 is a binding site for Mg(2+). The interval 125 to 197 (LKQIDADVAG…KDSEQFTRLS (73 aa)) is not present in other G-proteins. Positions 249-257 (DILKGRIKT) are G2 motif. The GTP site is built by leucine 251, threonine 257, glycine 279, asparagine 345, lysine 346, aspartate 348, and alanine 401. Residue threonine 257 participates in Mg(2+) binding. Positions 272–281 (FKVLDAGGQR) are G3 motif. Residues 341–348 (ILFLNKID) form a G4 motif region. Positions 399–404 (TCATDS) are G5 motif.

This sequence belongs to the G-alpha family. G(q) subfamily. As to quaternary structure, g proteins are composed of 3 units; alpha, beta and gamma. The alpha chain contains the guanine nucleotide binding site. The cofactor is Mg(2+).

In terms of biological role, guanine nucleotide-binding proteins (G proteins) are involved as modulators or transducers in various transmembrane signaling systems. Involved in the mating pathway. This Candida albicans (strain WO-1) (Yeast) protein is Guanine nucleotide-binding protein subunit alpha (CAG1).